The primary structure comprises 496 residues: MAKSKIRVRYAPSPTGHLHIGNARTALFNYLFARHNKGKFILRIEDTDLKRNVKDGEKSQMDNLTWLGIDWDEGPDKGGDFGPYRQSERKSIYDPLIQQLIDEGKAYESYMTEDELSAQREAQKARKEMPHYVYEFAGMTEDEKQAKIAAAKAAGIQPVIRFHVPENTTYAWDDMVKGKVSFESKTVGGDFVIKKRDGMPTYNFAVVVDDHMMEISHVFRGDDHVANTPKQLMIYEAFGWQPPKFGHMSLIINTETGKKLSKRDETVLQFIEQYRELGYLPEAMLNFIILLGWSPVGESELFSKREFIKMYDEKRLSKSPAAFDGKKLEWVNNQYIKKADENEVFAMSIRQLIKAGRLPQRPDMSQIEWTRTLVSLFKNQMSYTGQIVDLADLFFNGPADINDEAKAELDNDTALPVLKEFRQRIEDIDVFEATAIQKTIKSIQKDTKIKGRALYMPIRIAVSHEMHGPELPETIELLGRETTKKHLDAMIAELAK.

Positions 12 to 22 (PSPTGHLHIGN) match the 'HIGH' region motif. Positions 259 to 263 (KLSKR) match the 'KMSKS' region motif. K262 is an ATP binding site.

This sequence belongs to the class-I aminoacyl-tRNA synthetase family. Glutamate--tRNA ligase type 1 subfamily. As to quaternary structure, monomer.

It is found in the cytoplasm. It catalyses the reaction tRNA(Glu) + L-glutamate + ATP = L-glutamyl-tRNA(Glu) + AMP + diphosphate. Functionally, catalyzes the attachment of glutamate to tRNA(Glu) in a two-step reaction: glutamate is first activated by ATP to form Glu-AMP and then transferred to the acceptor end of tRNA(Glu). The sequence is that of Glutamate--tRNA ligase from Lactiplantibacillus plantarum (strain ATCC BAA-793 / NCIMB 8826 / WCFS1) (Lactobacillus plantarum).